The primary structure comprises 166 residues: MLKEDLINSGAIKFGDFVLTSGKRSGYYIDIKSAYTDPKILDEIGLEISGMVKSGKIAGMELGSVPILVSVSIKTKRPFVIIRKDDLKHGTRKRYIGSINLNEEIDIIDDVATTGGSIMKAAEIIRNNGGIVKRAICVVDREEGAAEMLKENNIELYSIIKASELR.

Residues R83, K84, H89, and 109–117 (DDVATTGGS) each bind 5-phospho-alpha-D-ribose 1-diphosphate. 2 residues coordinate orotate: T113 and R141.

The protein belongs to the purine/pyrimidine phosphoribosyltransferase family. PyrE subfamily. As to quaternary structure, homodimer. Requires Mg(2+) as cofactor.

The catalysed reaction is orotidine 5'-phosphate + diphosphate = orotate + 5-phospho-alpha-D-ribose 1-diphosphate. It participates in pyrimidine metabolism; UMP biosynthesis via de novo pathway; UMP from orotate: step 1/2. Catalyzes the transfer of a ribosyl phosphate group from 5-phosphoribose 1-diphosphate to orotate, leading to the formation of orotidine monophosphate (OMP). In Picrophilus torridus (strain ATCC 700027 / DSM 9790 / JCM 10055 / NBRC 100828 / KAW 2/3), this protein is Orotate phosphoribosyltransferase.